The following is a 355-amino-acid chain: Proto-oncogene Wnt-3 (355 aa).

Positions 1–21 (MEPHLLGLLLGLLLGGTRVLA) are cleaved as a signal peptide. Disulfide bonds link Cys80-Cys91, Cys131-Cys139, Cys141-Cys158, Cys206-Cys220, Cys208-Cys215, Cys284-Cys315, Cys300-Cys310, Cys314-Cys354, Cys330-Cys345, Cys332-Cys342, and Cys337-Cys338. N-linked (GlcNAc...) asparagine glycosylation occurs at Asn90. Residue Ser212 is the site of O-palmitoleoyl serine; by PORCN attachment. A glycan (N-linked (GlcNAc...) asparagine) is linked at Asn301.

Belongs to the Wnt family. Forms a soluble 1:1 complex with AFM; this prevents oligomerization and is required for prolonged biological activity. The complex with AFM may represent the physiological form in body fluids. Interacts with PORCN. Interacts with WLS. Post-translationally, palmitoleoylation is required for efficient binding to frizzled receptors. Depalmitoleoylation leads to Wnt signaling pathway inhibition.

It localises to the secreted. Its subcellular location is the extracellular space. It is found in the extracellular matrix. Functionally, ligand for members of the frizzled family of seven transmembrane receptors. Functions in the canonical Wnt signaling pathway that results in activation of transcription factors of the TCF/LEF family. Required for normal gastrulation, formation of the primitive streak, and for the formation of the mesoderm during early embryogenesis. Required for normal formation of the apical ectodermal ridge. Required for normal embryonic development, and especially for limb development. The polypeptide is Proto-oncogene Wnt-3 (WNT3) (Homo sapiens (Human)).